Consider the following 233-residue polypeptide: Biosynthetic peptidoglycan transglycosylase (233 aa).

The helical transmembrane segment at Leu-8–Ile-28 threads the bilayer.

It belongs to the glycosyltransferase 51 family.

It is found in the cell inner membrane. The catalysed reaction is [GlcNAc-(1-&gt;4)-Mur2Ac(oyl-L-Ala-gamma-D-Glu-L-Lys-D-Ala-D-Ala)](n)-di-trans,octa-cis-undecaprenyl diphosphate + beta-D-GlcNAc-(1-&gt;4)-Mur2Ac(oyl-L-Ala-gamma-D-Glu-L-Lys-D-Ala-D-Ala)-di-trans,octa-cis-undecaprenyl diphosphate = [GlcNAc-(1-&gt;4)-Mur2Ac(oyl-L-Ala-gamma-D-Glu-L-Lys-D-Ala-D-Ala)](n+1)-di-trans,octa-cis-undecaprenyl diphosphate + di-trans,octa-cis-undecaprenyl diphosphate + H(+). The protein operates within cell wall biogenesis; peptidoglycan biosynthesis. In terms of biological role, peptidoglycan polymerase that catalyzes glycan chain elongation from lipid-linked precursors. The polypeptide is Biosynthetic peptidoglycan transglycosylase (Neisseria meningitidis serogroup C / serotype 2a (strain ATCC 700532 / DSM 15464 / FAM18)).